A 689-amino-acid polypeptide reads, in one-letter code: Probable serine/threonine-protein kinase abkC (689 aa).

The segment at 42–79 (NNSGNENYKNFNYNYKNKNNYNNNNNNNNSNSSSNNNG) is disordered. Residues 257–689 (WFDEEPMASG…NNKNNNEKNK (433 aa)) form the Protein kinase domain. ATP is bound by residues 263-271 (MASGSVAQV) and Lys285. The active-site Proton acceptor is the Asp417. The disordered stretch occupies residues 652-689 (KQLNNDNNNNNNNNNNNKNNNDNNNKNNNNKNNNEKNK). A compositionally biased stretch (low complexity) spans 655–683 (NNDNNNNNNNNNNNKNNNDNNNKNNNNKN).

The protein belongs to the protein kinase superfamily. ADCK protein kinase family.

This is Probable serine/threonine-protein kinase abkC (abkC) from Dictyostelium discoideum (Social amoeba).